Here is a 230-residue protein sequence, read N- to C-terminus: MSRATLDKNPHEVASMFDAVARRYDLTNTVLSLGQDRFWRRETCAALGIGPGDRVLDLAAGTAVSTVELAASGAWCVAADFSVGMLSAGRQRDVPKVAGDATRLPFADESFDAVTISFGLRNVVDHVAGLEEMARVTRPGGRLVVCEFSTPTNRAFATLYKEYLMKALPRMARAVASNPDAYVYLAESIRAWPDQAGLARRIEAAGWSQVRWRNLTGGIVALHAAVKPPR.

Residues Thr62, Asp80, Asp100 to Ala101, and Ser117 each bind S-adenosyl-L-methionine.

Belongs to the class I-like SAM-binding methyltransferase superfamily. MenG/UbiE family.

It catalyses the reaction a 2-demethylmenaquinol + S-adenosyl-L-methionine = a menaquinol + S-adenosyl-L-homocysteine + H(+). It participates in quinol/quinone metabolism; menaquinone biosynthesis; menaquinol from 1,4-dihydroxy-2-naphthoate: step 2/2. Its function is as follows. Methyltransferase required for the conversion of demethylmenaquinol (DMKH2) to menaquinol (MKH2). This Mycobacterium sp. (strain KMS) protein is Demethylmenaquinone methyltransferase.